We begin with the raw amino-acid sequence, 432 residues long: Adenylosuccinate synthetase (432 aa).

GTP-binding positions include 12-18 and 40-42; these read GDEGKGK and GHT. The Proton acceptor role is filled by D13. The Mg(2+) site is built by D13 and G40. IMP is bound by residues 13-16, 38-41, T130, R144, Q226, T241, and R305; these read DEGK and NAGH. H41 functions as the Proton donor in the catalytic mechanism. Substrate is bound at residue 301–307; the sequence is STTGRSR. GTP is bound by residues R307, 333–335, and 415–417; these read KLD and SVG.

It belongs to the adenylosuccinate synthetase family. Homodimer. It depends on Mg(2+) as a cofactor.

The protein localises to the cytoplasm. The catalysed reaction is IMP + L-aspartate + GTP = N(6)-(1,2-dicarboxyethyl)-AMP + GDP + phosphate + 2 H(+). The protein operates within purine metabolism; AMP biosynthesis via de novo pathway; AMP from IMP: step 1/2. Its function is as follows. Plays an important role in the de novo pathway of purine nucleotide biosynthesis. Catalyzes the first committed step in the biosynthesis of AMP from IMP. In Bdellovibrio bacteriovorus (strain ATCC 15356 / DSM 50701 / NCIMB 9529 / HD100), this protein is Adenylosuccinate synthetase.